Reading from the N-terminus, the 469-residue chain is 2-oxoisovalerate dehydrogenase subunit beta, mitochondrial (469 aa).

The N-terminal 40 residues, 1–40, are a transit peptide targeting the mitochondrion; the sequence is MKRSTVVIRPSARALSRQASSQSFLLARSSALTSRQRRLY. Residue tyrosine 167 coordinates thiamine diphosphate. The K(+) site is built by glycine 194, leucine 196, and threonine 197.

As to quaternary structure, heterotetramer of 2 alpha and 2 beta chains. The cofactor is thiamine diphosphate.

It localises to the mitochondrion matrix. The enzyme catalyses N(6)-[(R)-lipoyl]-L-lysyl-[protein] + 3-methyl-2-oxobutanoate + H(+) = N(6)-[(R)-S(8)-2-methylpropanoyldihydrolipoyl]-L-lysyl-[protein] + CO2. Functionally, the branched-chain alpha-keto dehydrogenase complex catalyzes the overall conversion of alpha-keto acids to acyl-CoA and CO(2). It contains multiple copies of three enzymatic components: branched-chain alpha-keto acid decarboxylase (E1), lipoamide acyltransferase (E2) and lipoamide dehydrogenase (E3). The sequence is that of 2-oxoisovalerate dehydrogenase subunit beta, mitochondrial from Chaetomium thermophilum (strain DSM 1495 / CBS 144.50 / IMI 039719) (Thermochaetoides thermophila).